Consider the following 294-residue polypeptide: Golgi phosphoprotein 3 homolog sauron (294 aa).

A disordered region spans residues 1–52; it reads MNRSDGLVRRSVKPRENGGAEGGLNANTPDDNQDALDNLKDQEDNIDDGDSK. Residues 37 to 52 are compositionally biased toward basic and acidic residues; it reads DNLKDQEDNIDDGDSK. Residues W77, R86, K167, and R170 each contribute to the a 1,2-diacyl-sn-glycero-3-phospho-(1D-myo-inositol 4-phosphate) site. Residues 186 to 197 form a beta-hairpin required for oligomerization region; the sequence is EKQNFLLFDMTT.

The protein belongs to the GOLPH3/VPS74 family. As to quaternary structure, homooligomer. Interacts with botv, Ext2 and ttv. Interacts with Vti1. Interacts with Vps35, Rab5, Chc, Rab11, zip, Pav and Septin1.

Its subcellular location is the golgi apparatus membrane. It is found in the cytoplasmic vesicle. The protein resides in the cleavage furrow. In terms of biological role, phosphatidylinositol-4-phosphate-binding protein that links Golgi membranes to the cytoskeleton and may participate in the tensile force required for vesicle budding from the Golgi. Thereby, may play a role in Golgi membrane trafficking and could indirectly give its flattened shape to the Golgi apparatus. May also bind to the coatomer to regulate Golgi membrane trafficking. May play a role in anterograde transport from the Golgi to the plasma membrane and regulate secretion. Also involved in the control of the localization of Golgi enzymes through interaction with their cytoplasmic part. Functions in cytokinesis by regulating contractile ring formation and vesicle trafficking during cleavage furrow ingression. May also have a role in the intital steps of central spindle formation. Can also bind phosphatidylinositol-3-phosphate and phosphatidylinositol-5-phosphate in vitro. The sequence is that of Golgi phosphoprotein 3 homolog sauron from Drosophila melanogaster (Fruit fly).